The chain runs to 170 residues: Protein-export protein SecB (170 aa).

Belongs to the SecB family. In terms of assembly, homotetramer, a dimer of dimers. One homotetramer interacts with 1 SecA dimer.

It is found in the cytoplasm. One of the proteins required for the normal export of preproteins out of the cell cytoplasm. It is a molecular chaperone that binds to a subset of precursor proteins, maintaining them in a translocation-competent state. It also specifically binds to its receptor SecA. This chain is Protein-export protein SecB, found in Xanthomonas axonopodis pv. citri (strain 306).